The primary structure comprises 503 residues: Aromatase (503 aa).

3 helical membrane-spanning segments follow: residues 19–39, 51–71, and 303–323; these read EVMPVATMPILLLTGFLLLVW, GYCMGIGPLISHCRFLWMGIG, and MLIAAPDTMSVSVFFMLFLIA. The substrate site is built by aspartate 309 and methionine 374. Cysteine 437 is a heme binding site.

It belongs to the cytochrome P450 family. The cofactor is heme.

The protein localises to the endoplasmic reticulum membrane. It is found in the microsome membrane. The enzyme catalyses testosterone + 3 reduced [NADPH--hemoprotein reductase] + 3 O2 = 17beta-estradiol + formate + 3 oxidized [NADPH--hemoprotein reductase] + 4 H2O + 4 H(+). The catalysed reaction is androst-4-ene-3,17-dione + 3 reduced [NADPH--hemoprotein reductase] + 3 O2 = estrone + formate + 3 oxidized [NADPH--hemoprotein reductase] + 4 H2O + 4 H(+). It catalyses the reaction androst-4-ene-3,17-dione + reduced [NADPH--hemoprotein reductase] + O2 = 19-hydroxyandrost-4-ene-3,17-dione + oxidized [NADPH--hemoprotein reductase] + H2O + H(+). It carries out the reaction 19-hydroxyandrost-4-ene-3,17-dione + reduced [NADPH--hemoprotein reductase] + O2 = 19-oxo-androst-4-ene-3,17-dione + oxidized [NADPH--hemoprotein reductase] + 2 H2O + H(+). The enzyme catalyses 19-oxo-androst-4-ene-3,17-dione + reduced [NADPH--hemoprotein reductase] + O2 = estrone + formate + oxidized [NADPH--hemoprotein reductase] + H2O + 2 H(+). The catalysed reaction is estrone + reduced [NADPH--hemoprotein reductase] + O2 = 2-hydroxyestrone + oxidized [NADPH--hemoprotein reductase] + H2O + H(+). It catalyses the reaction 17beta-hydroxy-5alpha-androstan-3-one + reduced [NADPH--hemoprotein reductase] + O2 = 17beta,19-dihydroxy-3-oxo-5alpha-androstanone + oxidized [NADPH--hemoprotein reductase] + H2O + H(+). It carries out the reaction 17beta,19-dihydroxy-3-oxo-5alpha-androstanone + reduced [NADPH--hemoprotein reductase] + O2 = 17beta-hydroxy-3,19-dioxo-5alpha-androstanone + oxidized [NADPH--hemoprotein reductase] + 2 H2O + H(+). The enzyme catalyses 17beta-hydroxy-3,19-dioxo-5alpha-androstanone + reduced [NADPH--hemoprotein reductase] + O2 = 17beta-hydroxy-3-oxo-19-nor-5alpha-androst-1-ene + formate + oxidized [NADPH--hemoprotein reductase] + H2O + 2 H(+). It functions in the pathway steroid hormone biosynthesis. Its function is as follows. A cytochrome P450 monooxygenase that catalyzes the conversion of C19 androgens, androst-4-ene-3,17-dione (androstenedione) and testosterone to the C18 estrogens, estrone and estradiol, respectively. Catalyzes three successive oxidations of C19 androgens: two conventional oxidations at C19 yielding 19-hydroxy and 19-oxo/19-aldehyde derivatives, followed by a third oxidative aromatization step that involves C1-beta hydrogen abstraction combined with cleavage of the C10-C19 bond to yield a phenolic A ring and formic acid. Alternatively, the third oxidative reaction yields a 19-norsteroid and formic acid. Converts dihydrotestosterone to delta1,10-dehydro 19-nordihydrotestosterone and may play a role in homeostasis of this potent androgen. Also displays 2-hydroxylase activity toward estrone. Mechanistically, uses molecular oxygen inserting one oxygen atom into a substrate, and reducing the second into a water molecule, with two electrons provided by NADPH via cytochrome P450 reductase (CPR; NADPH-ferrihemoprotein reductase). This is Aromatase (CYP19A1) from Canis lupus familiaris (Dog).